Here is a 165-residue protein sequence, read N- to C-terminus: ATP synthase subunit b (165 aa).

The chain crosses the membrane as a helical span at residues 11 to 31 (LIFWTIVNFLLLVFLLGKFAW).

This sequence belongs to the ATPase B chain family. In terms of assembly, F-type ATPases have 2 components, F(1) - the catalytic core - and F(0) - the membrane proton channel. F(1) has five subunits: alpha(3), beta(3), gamma(1), delta(1), epsilon(1). F(0) has three main subunits: a(1), b(2) and c(10-14). The alpha and beta chains form an alternating ring which encloses part of the gamma chain. F(1) is attached to F(0) by a central stalk formed by the gamma and epsilon chains, while a peripheral stalk is formed by the delta and b chains.

It is found in the cell membrane. F(1)F(0) ATP synthase produces ATP from ADP in the presence of a proton or sodium gradient. F-type ATPases consist of two structural domains, F(1) containing the extramembraneous catalytic core and F(0) containing the membrane proton channel, linked together by a central stalk and a peripheral stalk. During catalysis, ATP synthesis in the catalytic domain of F(1) is coupled via a rotary mechanism of the central stalk subunits to proton translocation. In terms of biological role, component of the F(0) channel, it forms part of the peripheral stalk, linking F(1) to F(0). This Elusimicrobium minutum (strain Pei191) protein is ATP synthase subunit b.